A 312-amino-acid chain; its full sequence is Dihydroorotate dehydrogenase B (NAD(+)), catalytic subunit (312 aa).

FMN contacts are provided by residues Ser23 and 47–48 (KA). Residues Lys47 and 71–75 (NAIGL) contribute to the substrate site. The FMN site is built by Asn102 and Asn130. Asn130 contacts substrate. Catalysis depends on Cys133, which acts as the Nucleophile. FMN contacts are provided by Lys168 and Ile194. A substrate-binding site is contributed by 195 to 196 (NT). FMN contacts are provided by residues Gly220, 246 to 247 (GG), and 268 to 269 (GT).

Belongs to the dihydroorotate dehydrogenase family. Type 1 subfamily. In terms of assembly, heterotetramer of 2 PyrK and 2 PyrD type B subunits. The cofactor is FMN.

It is found in the cytoplasm. The enzyme catalyses (S)-dihydroorotate + NAD(+) = orotate + NADH + H(+). Its pathway is pyrimidine metabolism; UMP biosynthesis via de novo pathway; orotate from (S)-dihydroorotate (NAD(+) route): step 1/1. Functionally, catalyzes the conversion of dihydroorotate to orotate with NAD(+) as electron acceptor. The sequence is that of Dihydroorotate dehydrogenase B (NAD(+)), catalytic subunit (pyrDB) from Enterococcus faecalis (strain ATCC 700802 / V583).